The following is a 508-amino-acid chain: ATP synthase subunit alpha, chloroplastic (508 aa).

173 to 180 (GDRQTGKT) contributes to the ATP binding site.

It belongs to the ATPase alpha/beta chains family. In terms of assembly, F-type ATPases have 2 components, CF(1) - the catalytic core - and CF(0) - the membrane proton channel. CF(1) has five subunits: alpha(3), beta(3), gamma(1), delta(1), epsilon(1). CF(0) has four main subunits: a, b, b' and c.

The protein localises to the plastid. It is found in the chloroplast thylakoid membrane. The enzyme catalyses ATP + H2O + 4 H(+)(in) = ADP + phosphate + 5 H(+)(out). In terms of biological role, produces ATP from ADP in the presence of a proton gradient across the membrane. The alpha chain is a regulatory subunit. The chain is ATP synthase subunit alpha, chloroplastic from Chara vulgaris (Common stonewort).